Here is a 741-residue protein sequence, read N- to C-terminus: MSQLLEPSAETIKAERLYREMGLTDDEFALAEKIVGRPLNFTETGLFSVMWSEHCSYKNSKVLLKKFPTDGENVLQGPGEGAGIIDIKDEQAVVFKIESHNHPSAIEPYQGAATGVGGILRDVFSMGARPVALLNSLRFGELESKKVKYLFEEVVAGIAGYGNCVGVPTVGGEVQFDPCYESNPLVNAMCVGLIDHKDIQKGQAKGVGNTVMYVGASTGRDGIHGATFASEELSEDSDAKRPAVQVGDPFMEKLLLEACLEVVQSDALIGIQDMGAAGLVSSSAEMASKAGSGIEMNLDLVPQREAGMTPYEMMLSESQERMLLVVEKGREHEIKATFERWNLHAVEVGVVTDDRRLRLTHKGEIVADVPVDALAEDAPVYHKPSKVPAYFDAFQQQAPYIPEITEANETLLKLLAQPTIASKEWVYEQYDYMVQTNTVVEPGSDAAVIRIRGTNKALAMTTDCNSRYLYVDPEMGGKIAIAEAARNLVCSGAKPLGVTDCLNYGNPEKPEIFWQLEKSTDGLSEACRELGTPVIGGNVSLYNERSGGAVYPTPVIGMVGLVEDVAHITTQSFKNAGDLIYVIGETKAEFGGSELQKMLVGELSGKAPEIDLAVEKSRQQQLLSAIKQGLVQSAHDVAEGGLAVSLAEKMMECPFGAEVSLSLSAAELFAESQSRFIVTVKPSDQQRFENTVLDAVVVGAVTESRKLTIRNENGNAVIDLCQDELVKAWKGAIPCLLKSKA.

The active site involves H54. The ATP site is built by Y57 and K96. E98 is a binding site for Mg(2+). Residues 99–102 (SHNH) and R121 contribute to the substrate site. H100 acts as the Proton acceptor in catalysis. D122 lines the Mg(2+) pocket. Position 245 (Q245) interacts with substrate. Position 273 (D273) interacts with Mg(2+). Position 317–319 (317–319 (ESQ)) interacts with substrate. D500 and G537 together coordinate ATP. Residue N538 coordinates Mg(2+). S540 provides a ligand contact to substrate.

Belongs to the FGAMS family. Monomer. Part of the FGAM synthase complex composed of 1 PurL, 1 PurQ and 2 PurS subunits.

The protein resides in the cytoplasm. The enzyme catalyses N(2)-formyl-N(1)-(5-phospho-beta-D-ribosyl)glycinamide + L-glutamine + ATP + H2O = 2-formamido-N(1)-(5-O-phospho-beta-D-ribosyl)acetamidine + L-glutamate + ADP + phosphate + H(+). It participates in purine metabolism; IMP biosynthesis via de novo pathway; 5-amino-1-(5-phospho-D-ribosyl)imidazole from N(2)-formyl-N(1)-(5-phospho-D-ribosyl)glycinamide: step 1/2. In terms of biological role, part of the phosphoribosylformylglycinamidine synthase complex involved in the purines biosynthetic pathway. Catalyzes the ATP-dependent conversion of formylglycinamide ribonucleotide (FGAR) and glutamine to yield formylglycinamidine ribonucleotide (FGAM) and glutamate. The FGAM synthase complex is composed of three subunits. PurQ produces an ammonia molecule by converting glutamine to glutamate. PurL transfers the ammonia molecule to FGAR to form FGAM in an ATP-dependent manner. PurS interacts with PurQ and PurL and is thought to assist in the transfer of the ammonia molecule from PurQ to PurL. The sequence is that of Phosphoribosylformylglycinamidine synthase subunit PurL from Shouchella clausii (strain KSM-K16) (Alkalihalobacillus clausii).